The primary structure comprises 323 residues: tRNA dimethylallyltransferase (323 aa).

15–22 (GATGSGKT) provides a ligand contact to ATP. 17–22 (TGSGKT) provides a ligand contact to substrate. Interaction with substrate tRNA regions lie at residues 40–43 (DSRQ) and 164–168 (QRLIR).

The protein belongs to the IPP transferase family. In terms of assembly, monomer. Mg(2+) is required as a cofactor.

It carries out the reaction adenosine(37) in tRNA + dimethylallyl diphosphate = N(6)-dimethylallyladenosine(37) in tRNA + diphosphate. Catalyzes the transfer of a dimethylallyl group onto the adenine at position 37 in tRNAs that read codons beginning with uridine, leading to the formation of N6-(dimethylallyl)adenosine (i(6)A). This chain is tRNA dimethylallyltransferase, found in Chloroherpeton thalassium (strain ATCC 35110 / GB-78).